The chain runs to 326 residues: Putative ABC transporter ATP-binding protein MA_4020 (326 aa).

Over residues 1 to 12 (MTISTLSSSYGN) the composition is skewed to polar residues. A disordered region spans residues 1-34 (MTISTLSSSYGNAQDVPAEDSDRHGSIEPGSEKA). The 236-residue stretch at 46–281 (LEVKNLCHRY…PELLRKAHLR (236 aa)) folds into the ABC transporter domain. An ATP-binding site is contributed by 80-87 (GANGAGKS).

Belongs to the ABC transporter superfamily.

Its subcellular location is the cell membrane. Probably part of an ABC transporter complex. Responsible for energy coupling to the transport system. This chain is Putative ABC transporter ATP-binding protein MA_4020, found in Methanosarcina acetivorans (strain ATCC 35395 / DSM 2834 / JCM 12185 / C2A).